Consider the following 521-residue polypeptide: U4/U6 small nuclear ribonucleoprotein Prp4 (521 aa).

N6-acetyllysine is present on Lys26. 7 WD repeats span residues Gly228–Thr267, Gly270–Asp317, Gly320–His359, Gly362–Phe401, Gly404–Thr443, Ala446–Thr486, and Gly489–Glu521.

Component of the precatalytic spliceosome (spliceosome B complex). Component of the U4/U6-U5 tri-snRNP complex, a building block of the precatalytic spliceosome (spliceosome B complex). The U4/U6-U5 tri-snRNP complex is composed of the U4, U6 and U5 snRNAs and at least PRPF3, PRPF4, PRPF6, PRPF8, PRPF31, SNRNP200, TXNL4A, SNRNP40, SNRPB, SNRPD1, SNRPD2, SNRPD3, SNRPE, SNRPF, SNRPG, DDX23, CD2BP2, PPIH, SNU13, EFTUD2, SART1 and USP39, plus LSM2, LSM3, LSM4, LSM5, LSM6, LSM7 and LSM8. Interacts directly with PRPF18, PPIH and PRPF3. Part of a heteromeric complex containing PPIH, PRPF3 and PRPF4 that is stable in the absence of RNA. Interacts with ERCC6.

Its subcellular location is the nucleus. The protein localises to the nucleus speckle. Plays a role in pre-mRNA splicing as component of the U4/U6-U5 tri-snRNP complex that is involved in spliceosome assembly, and as component of the precatalytic spliceosome (spliceosome B complex). This is U4/U6 small nuclear ribonucleoprotein Prp4 (PRPF4) from Pongo abelii (Sumatran orangutan).